The sequence spans 486 residues: Glutamyl-tRNA(Gln) amidotransferase subunit A (486 aa).

Catalysis depends on charge relay system residues K79 and S154. S178 functions as the Acyl-ester intermediate in the catalytic mechanism.

This sequence belongs to the amidase family. GatA subfamily. In terms of assembly, heterotrimer of A, B and C subunits.

The catalysed reaction is L-glutamyl-tRNA(Gln) + L-glutamine + ATP + H2O = L-glutaminyl-tRNA(Gln) + L-glutamate + ADP + phosphate + H(+). Its function is as follows. Allows the formation of correctly charged Gln-tRNA(Gln) through the transamidation of misacylated Glu-tRNA(Gln) in organisms which lack glutaminyl-tRNA synthetase. The reaction takes place in the presence of glutamine and ATP through an activated gamma-phospho-Glu-tRNA(Gln). The protein is Glutamyl-tRNA(Gln) amidotransferase subunit A of Myxococcus xanthus (strain DK1622).